The chain runs to 801 residues: Elongation factor G, mitochondrial (801 aa).

A mitochondrion-targeting transit peptide spans 1-62 (MRTPTLARLP…LSKHFQQRRN (62 aa)). The tr-type G domain occupies 99–386 (SRVRNIGIAA…GVIDYLPNPS (288 aa)). GTP is bound by residues 108 to 115 (AHIDSGKT), 184 to 188 (DTPGH), and 238 to 241 (NKMD).

The protein belongs to the TRAFAC class translation factor GTPase superfamily. Classic translation factor GTPase family. EF-G/EF-2 subfamily.

The protein localises to the mitochondrion. The protein operates within protein biosynthesis; polypeptide chain elongation. Its function is as follows. Mitochondrial GTPase that catalyzes the GTP-dependent ribosomal translocation step during translation elongation. During this step, the ribosome changes from the pre-translocational (PRE) to the post-translocational (POST) state as the newly formed A-site-bound peptidyl-tRNA and P-site-bound deacylated tRNA move to the P and E sites, respectively. Catalyzes the coordinated movement of the two tRNA molecules, the mRNA and conformational changes in the ribosome. This chain is Elongation factor G, mitochondrial (mef1), found in Aspergillus niger (strain ATCC MYA-4892 / CBS 513.88 / FGSC A1513).